We begin with the raw amino-acid sequence, 2157 residues long: Conidial yellow pigment biosynthesis polyketide synthase (2157 aa).

Positions 8–244 are N-terminal acylcarrier protein transacylase domain (SAT); the sequence is YLFGDQTGDF…VMVPIHGPFH (237 aa). The 432-residue stretch at 376-807 folds into the Ketosynthase family 3 (KS3) domain; it reads LSKIAIIGMS…GGNTALLLED (432 aa). Residues Cys548, His683, and His725 each act as for beta-ketoacyl synthase activity in the active site. The malonyl-CoA:ACP transacylase (MAT) domain stretch occupies residues 912–1232; it reads FLFTGQGAQY…LSSLYLAGVD (321 aa). The For acyl/malonyl transferase activity role is filled by Ser1001. The interval 1290–1603 is product template (PT) domain; that stretch reads TTSAQRVVES…RKILDIALPP (314 aa). The N-terminal hotdog fold stretch occupies residues 1294-1425; the sequence is QRVVESRDDG…CEVKLFDCMA (132 aa). The region spanning 1294-1598 is the PKS/mFAS DH domain; sequence QRVVESRDDG…FQALSRKILD (305 aa). Residue His1326 is the Proton acceptor; for dehydratase activity of the active site. Residues 1453–1598 form a C-terminal hotdog fold region; the sequence is AHRLRRGMVY…FQALSRKILD (146 aa). The Proton donor; for dehydratase activity role is filled by Asp1511. A disordered region spans residues 1607–1638; that stretch reads SKAQTSPIQSSAPQKPIETAKPTSRPAPPVTM. Polar residues predominate over residues 1608–1619; that stretch reads KAQTSPIQSSAP. Positions 1645–1722 constitute a Carrier 1 domain; sequence SAGPSVVVRA…DFKRFVTQLS (78 aa). At Ser1682 the chain carries O-(pantetheine 4'-phosphoryl)serine. The disordered stretch occupies residues 1725–1760; it reads VASDSSSTDRESEYSFNGDSCSGLSSPASPGTVSPP. Residues 1741 to 1759 show a composition bias toward polar residues; it reads NGDSCSGLSSPASPGTVSP. The Carrier 2 domain occupies 1767 to 1844; the sequence is IHENGTMKEI…QIETALDLKP (78 aa). Ser1804 bears the O-(pantetheine 4'-phosphoryl)serine mark. The interval 1847–1888 is disordered; sequence VPTAVPQSQPITLPQSQSTKQLSTRPTSSSDNHPPATSILLQ. Residues 1851 to 1878 are compositionally biased toward polar residues; the sequence is VPQSQPITLPQSQSTKQLSTRPTSSSDN. Residues 1877–2149 are claisen cyclase domain; the sequence is DNHPPATSIL…ELATFMKNAL (273 aa). Ser1967 acts as the For thioesterase activity in catalysis.

Pantetheine 4'-phosphate serves as cofactor.

The catalysed reaction is 6 malonyl-CoA + acetyl-CoA + 6 H(+) = naphtopyrone YWA1 + 6 CO2 + 7 CoA + H2O. The protein operates within polyketide biosynthesis; heptaketide naphthopyrone YWA1 biosynthesis. Functionally, non-reducing polyketide synthase that condenses acetate units to form a heptaketide naphthopyrene YWA1, a yellow pigment found in mature asexual spores (conidia), via a polyketomethylene intermediate step. This is Conidial yellow pigment biosynthesis polyketide synthase from Emericella nidulans (strain FGSC A4 / ATCC 38163 / CBS 112.46 / NRRL 194 / M139) (Aspergillus nidulans).